A 169-amino-acid chain; its full sequence is Putative glycine cleavage system H protein, mitochondrial (169 aa).

The Lipoyl-binding domain occupies 60-142 (VGTVGITSYA…EEEGWICKIK (83 aa)). Lys101 bears the N6-lipoyllysine mark. Ser131 carries the post-translational modification Phosphoserine.

Belongs to the GcvH family. Component of the glycine decarboxylase complex (GDC), which is composed of four proteins: P, T, L and H. It depends on (R)-lipoate as a cofactor.

It is found in the mitochondrion. Its function is as follows. The glycine cleavage system (glycine decarboxylase complex) catalyzes the degradation of glycine. The H protein shuttles the methylamine group of glycine from the P protein to the T protein. This chain is Putative glycine cleavage system H protein, mitochondrial (gcv3), found in Schizosaccharomyces pombe (strain 972 / ATCC 24843) (Fission yeast).